The sequence spans 501 residues: Amidophosphoribosyltransferase (501 aa).

The active-site Nucleophile is Cys-2. Positions 2-234 (CGIVGIVGKS…PGEAVYITEE (233 aa)) constitute a Glutamine amidotransferase type-2 domain. Thr-303, Asp-365, and Asp-366 together coordinate Mg(2+).

This sequence in the C-terminal section; belongs to the purine/pyrimidine phosphoribosyltransferase family. Mg(2+) serves as cofactor.

It carries out the reaction 5-phospho-beta-D-ribosylamine + L-glutamate + diphosphate = 5-phospho-alpha-D-ribose 1-diphosphate + L-glutamine + H2O. It functions in the pathway purine metabolism; IMP biosynthesis via de novo pathway; N(1)-(5-phospho-D-ribosyl)glycinamide from 5-phospho-alpha-D-ribose 1-diphosphate: step 1/2. Its function is as follows. Catalyzes the formation of phosphoribosylamine from phosphoribosylpyrophosphate (PRPP) and glutamine. The chain is Amidophosphoribosyltransferase from Pseudomonas aeruginosa (strain ATCC 15692 / DSM 22644 / CIP 104116 / JCM 14847 / LMG 12228 / 1C / PRS 101 / PAO1).